The sequence spans 278 residues: Antiviral protein MAP (278 aa).

Positions 1 to 28 (MLTTTKVFFLLLTTWITWYAIVNPQSRA) are cleaved as a signal peptide. C64 and C248 form a disulfide bridge. Residue E196 is part of the active site.

It catalyses the reaction Endohydrolysis of the N-glycosidic bond at one specific adenosine on the 28S rRNA.. Its function is as follows. Inhibits viral infection of plants, and protein synthesis in vitro. The chain is Antiviral protein MAP from Mirabilis jalapa (Garden four-o'clock).